Consider the following 284-residue polypeptide: Homeobox protein SMOX-5 (284 aa).

Positions 37 to 96 (RRKTRTTFSNCQLNELENNFNRQRYLTPTDRDRIAKHLGLTNTQVITWFQNRRAKLKREA) form a DNA-binding region, homeobox. The interval 117–172 (LSLSDHDHEETQIDDENEQGDNNNDDDGDDNDVEEDDGEEQEKNHTKYLTQPPSIS) is disordered. Positions 128–156 (QIDDENEQGDNNNDDDGDDNDVEEDDGEE) are enriched in acidic residues.

It is found in the nucleus. This chain is Homeobox protein SMOX-5 (SMOX-5), found in Schistosoma mansoni (Blood fluke).